Here is a 344-residue protein sequence, read N- to C-terminus: Arginine N-succinyltransferase (344 aa).

Leu-125 provides a ligand contact to succinyl-CoA. Residue His-229 is the Proton donor of the active site.

Belongs to the arginine N-succinyltransferase family.

It catalyses the reaction succinyl-CoA + L-arginine = N(2)-succinyl-L-arginine + CoA + H(+). It functions in the pathway amino-acid degradation; L-arginine degradation via AST pathway; L-glutamate and succinate from L-arginine: step 1/5. Its function is as follows. Catalyzes the transfer of succinyl-CoA to arginine to produce N(2)-succinylarginine. The protein is Arginine N-succinyltransferase of Shigella boydii serotype 18 (strain CDC 3083-94 / BS512).